The sequence spans 1976 residues: Putative callose synthase 8 (1976 aa).

Topologically, residues 1 to 530 (MSHEIVPVDP…FWQIFRSFDR (530 aa)) are cytoplasmic. Residues 531–551 (MWSFFVLSLQALIIMACHDVG) form a helical membrane-spanning segment. Topologically, residues 552 to 565 (SPLQVFNANIFEDV) are extracellular. A helical transmembrane segment spans residues 566–586 (MSIFITSAILKLIKGILDIIF). Residues 587–602 (KWKARNTMPINEKKKR) lie on the Cytoplasmic side of the membrane. The chain crosses the membrane as a helical span at residues 603 to 623 (LVKLGFAAMWTIILPVLYSHS). Residues 624–648 (RRKYICYFTNYKTWLGEWCFSPYMV) lie on the Extracellular side of the membrane. A helical membrane pass occupies residues 649–669 (AVTIYLTGSAIELVLFFVPAI). At 670-707 (SKYIETSNHGIFKTLSWWGQPRLYVGRGMQETQVSQFK) the chain is on the cytoplasmic side. A helical membrane pass occupies residues 708 to 728 (YTFFWILVLLTKFAFSYAFEI). The Extracellular segment spans residues 729 to 759 (KPLIEPTRLIMKVGVRNYEWHEIFPEVKSNA). A helical membrane pass occupies residues 760-780 (AAIVAVWAPIMVVYFMDTQIW). Residues 781-1544 (YSVYCTIFGG…FDFFRMLSCY (764 aa)) lie on the Cytoplasmic side of the membrane. Residues 1545 to 1565 (FTTIGFYFSSLISVIGIYIYL) traverse the membrane as a helical segment. Residues 1566 to 1595 (YGQLYLVLSGLQKTLILEAKVKNIKSLETA) are Extracellular-facing. The chain crosses the membrane as a helical span at residues 1596–1616 (LASQSFIQLGLLTGLPMVMEI). The Cytoplasmic segment spans residues 1617–1620 (GLEK). A helical membrane pass occupies residues 1621 to 1641 (GFLIAFQDFILMQLQLAAFFF). At 1642-1688 (TFSLGTKTHYFGRTILHGGAKYRPTGRKVVVFHANFSENYRLYSRSH) the chain is on the extracellular side. Asn-1676 is a glycosylation site (N-linked (GlcNAc...) asparagine). A helical transmembrane segment spans residues 1689 to 1709 (FIKGFELMILLVVYELFKHTS). Residues 1710–1715 (QSNMAY) lie on the Cytoplasmic side of the membrane. Residues 1716–1736 (SFITFSVWFMSFTWLCAPFLF) traverse the membrane as a helical segment. The Extracellular segment spans residues 1737-1790 (NPSGFTWEIIVGDWRDWNRWIKEQGGIGIQQDKSWQSWWNDEQAHLRGSGVGAR). The chain crosses the membrane as a helical span at residues 1791 to 1811 (CLEIILSLRFFVYQYGLVYHL). Residues 1812 to 1819 (DITQSNTN) are Cytoplasmic-facing. A helical transmembrane segment spans residues 1820 to 1840 (IIVYALSWVVILATFFTVKAV). Residues 1841–1856 (DLGRQLFSTRKHLVFR) lie on the Extracellular side of the membrane. Residues 1857 to 1877 (FFKVFVFVSILTIIITLANIC) traverse the membrane as a helical segment. Residues 1878-1884 (HLSVKDL) lie on the Cytoplasmic side of the membrane. Residues 1885 to 1905 (LVSCLAFLPTGWGLILIAQAV) traverse the membrane as a helical segment. Topologically, residues 1906-1928 (RPKIEGTSLWEFTQVLARAYDYG) are extracellular. A helical transmembrane segment spans residues 1929 to 1949 (MGVVLFAPMAILAWLPIISAF). The Cytoplasmic portion of the chain corresponds to 1950-1976 (QTRFLFNEAFNRRLQIQPILAGKKKNR).

This sequence belongs to the glycosyltransferase 48 family.

Its subcellular location is the cell membrane. The enzyme catalyses [(1-&gt;3)-beta-D-glucosyl](n) + UDP-alpha-D-glucose = [(1-&gt;3)-beta-D-glucosyl](n+1) + UDP + H(+). Its function is as follows. Involved in callose synthesis at the forming cell plate during cytokinesis. During plant growth and development, callose is found as a transitory component of the cell plate in dividing cells, is a major component of pollen mother cell walls and pollen tubes, and is found as a structural component of plasmodesmatal canals. In Arabidopsis thaliana (Mouse-ear cress), this protein is Putative callose synthase 8 (CALS8).